Consider the following 671-residue polypeptide: Arginine--tRNA ligase (671 aa).

Residues 124 to 134 carry the 'HIGH' region motif; sequence PNVAKPMHVGH. Positions 223-254 are disordered; it reads KSDAKTAKEVSDQSESDENLKPKDKKKLRKNA. Positions 224–233 are enriched in basic and acidic residues; that stretch reads SDAKTAKEVS.

The protein belongs to the class-I aminoacyl-tRNA synthetase family. In terms of assembly, monomer.

The protein resides in the cytoplasm. It catalyses the reaction tRNA(Arg) + L-arginine + ATP = L-arginyl-tRNA(Arg) + AMP + diphosphate. This Rhodopirellula baltica (strain DSM 10527 / NCIMB 13988 / SH1) protein is Arginine--tRNA ligase.